Here is a 199-residue protein sequence, read N- to C-terminus: NAD(P)H dehydrogenase (quinone) (199 aa).

One can recognise a Flavodoxin-like domain in the interval 4–190; that stretch reads VLVLYYSAYG…DGARFQGKRV (187 aa). Residues 10–15 and 78–80 contribute to the FMN site; these read SAYGHM and TRY. Tyr-12 contacts NAD(+). Trp-98 contacts substrate. FMN-binding positions include 113–119 and His-134; that span reads STATQHG. Residues 157–185 are disordered; the sequence is GGAPYGMTTTADGDGSRQPSEQELDGARF. Positions 163 to 177 are enriched in polar residues; that stretch reads MTTTADGDGSRQPSE.

It belongs to the WrbA family. The cofactor is FMN.

It catalyses the reaction a quinone + NADH + H(+) = a quinol + NAD(+). The catalysed reaction is a quinone + NADPH + H(+) = a quinol + NADP(+). In Brucella anthropi (strain ATCC 49188 / DSM 6882 / CCUG 24695 / JCM 21032 / LMG 3331 / NBRC 15819 / NCTC 12168 / Alc 37) (Ochrobactrum anthropi), this protein is NAD(P)H dehydrogenase (quinone).